Reading from the N-terminus, the 430-residue chain is Adenylosuccinate synthetase (430 aa).

GTP contacts are provided by residues 12-18 (GDEGKGK) and 40-42 (GHT). The Proton acceptor role is filled by Asp-13. Mg(2+) is bound by residues Asp-13 and Gly-40. Residues 13 to 16 (DEGK), 38 to 41 (NAGH), Thr-129, Arg-143, Gln-224, Thr-239, and Arg-303 each bind IMP. His-41 functions as the Proton donor in the catalytic mechanism. Substrate is bound at residue 299–305 (TVSNRER). GTP-binding positions include Arg-305, 331–333 (KLD), and 413–415 (STG).

The protein belongs to the adenylosuccinate synthetase family. In terms of assembly, homodimer. It depends on Mg(2+) as a cofactor.

Its subcellular location is the cytoplasm. It catalyses the reaction IMP + L-aspartate + GTP = N(6)-(1,2-dicarboxyethyl)-AMP + GDP + phosphate + 2 H(+). It participates in purine metabolism; AMP biosynthesis via de novo pathway; AMP from IMP: step 1/2. Plays an important role in the de novo pathway of purine nucleotide biosynthesis. Catalyzes the first committed step in the biosynthesis of AMP from IMP. The protein is Adenylosuccinate synthetase of Ehrlichia ruminantium (strain Gardel).